The sequence spans 308 residues: Pantothenate kinase (308 aa).

91–98 (GSVAVGKS) contributes to the ATP binding site.

It belongs to the prokaryotic pantothenate kinase family.

The protein resides in the cytoplasm. It catalyses the reaction (R)-pantothenate + ATP = (R)-4'-phosphopantothenate + ADP + H(+). Its pathway is cofactor biosynthesis; coenzyme A biosynthesis; CoA from (R)-pantothenate: step 1/5. The sequence is that of Pantothenate kinase from Lacticaseibacillus paracasei (strain ATCC 334 / BCRC 17002 / CCUG 31169 / CIP 107868 / KCTC 3260 / NRRL B-441) (Lactobacillus paracasei).